The following is a 408-amino-acid chain: Dual-specificity RNA methyltransferase RlmN (408 aa).

Catalysis depends on Glu93, which acts as the Proton acceptor. Residues 99–379 form the Radical SAM core domain; that stretch reads ETNRGTLCIS…TTTRKTRGDD (281 aa). An intrachain disulfide couples Cys106 to Cys384. [4Fe-4S] cluster-binding residues include Cys113, Cys117, and Cys120. Positions 152 to 196 are disordered; the sequence is SPAGSKDGDGGPDHASRATKLDHRAADAKGVQSDSWRSSDPEEDH. A compositionally biased stretch (basic and acidic residues) spans 157–178; that stretch reads KDGDGGPDHASRATKLDHRAAD. S-adenosyl-L-methionine-binding positions include 210–211, Ser242, 264–266, and Asn341; these read GE and SLH. Catalysis depends on Cys384, which acts as the S-methylcysteine intermediate.

This sequence belongs to the radical SAM superfamily. RlmN family. Requires [4Fe-4S] cluster as cofactor.

It localises to the cytoplasm. It catalyses the reaction adenosine(2503) in 23S rRNA + 2 reduced [2Fe-2S]-[ferredoxin] + 2 S-adenosyl-L-methionine = 2-methyladenosine(2503) in 23S rRNA + 5'-deoxyadenosine + L-methionine + 2 oxidized [2Fe-2S]-[ferredoxin] + S-adenosyl-L-homocysteine. The catalysed reaction is adenosine(37) in tRNA + 2 reduced [2Fe-2S]-[ferredoxin] + 2 S-adenosyl-L-methionine = 2-methyladenosine(37) in tRNA + 5'-deoxyadenosine + L-methionine + 2 oxidized [2Fe-2S]-[ferredoxin] + S-adenosyl-L-homocysteine. Its function is as follows. Specifically methylates position 2 of adenine 2503 in 23S rRNA and position 2 of adenine 37 in tRNAs. m2A2503 modification seems to play a crucial role in the proofreading step occurring at the peptidyl transferase center and thus would serve to optimize ribosomal fidelity. The protein is Dual-specificity RNA methyltransferase RlmN of Aromatoleum aromaticum (strain DSM 19018 / LMG 30748 / EbN1) (Azoarcus sp. (strain EbN1)).